Here is a 92-residue protein sequence, read N- to C-terminus: Large ribosomal subunit protein bL28 (92 aa).

This sequence belongs to the bacterial ribosomal protein bL28 family.

The protein is Large ribosomal subunit protein bL28 of Borrelia duttonii (strain Ly).